The primary structure comprises 283 residues: Elongation factor Ts (283 aa).

An involved in Mg(2+) ion dislocation from EF-Tu region spans residues 79–82; sequence TDFV.

It belongs to the EF-Ts family.

The protein resides in the cytoplasm. Associates with the EF-Tu.GDP complex and induces the exchange of GDP to GTP. It remains bound to the aminoacyl-tRNA.EF-Tu.GTP complex up to the GTP hydrolysis stage on the ribosome. The sequence is that of Elongation factor Ts from Shewanella oneidensis (strain ATCC 700550 / JCM 31522 / CIP 106686 / LMG 19005 / NCIMB 14063 / MR-1).